We begin with the raw amino-acid sequence, 334 residues long: Adenosine deaminase (334 aa).

Residues histidine 12 and histidine 14 each coordinate Zn(2+). Histidine 14, aspartate 16, and glycine 170 together coordinate substrate. Histidine 197 is a binding site for Zn(2+). Glutamate 200 serves as the catalytic Proton donor. Aspartate 278 is a Zn(2+) binding site. Position 279 (aspartate 279) interacts with substrate.

This sequence belongs to the metallo-dependent hydrolases superfamily. Adenosine and AMP deaminases family. Adenosine deaminase subfamily. Zn(2+) serves as cofactor.

It catalyses the reaction adenosine + H2O + H(+) = inosine + NH4(+). It carries out the reaction 2'-deoxyadenosine + H2O + H(+) = 2'-deoxyinosine + NH4(+). In terms of biological role, catalyzes the hydrolytic deamination of adenosine and 2-deoxyadenosine. This Vibrio parahaemolyticus serotype O3:K6 (strain RIMD 2210633) protein is Adenosine deaminase.